Consider the following 385-residue polypeptide: 1-deoxy-D-xylulose 5-phosphate reductoisomerase (385 aa).

The NADPH site is built by Thr10, Gly11, Ser12, Ile13, Lys37, and Asn124. Lys125 lines the 1-deoxy-D-xylulose 5-phosphate pocket. Glu126 is a binding site for NADPH. Asp150 is a Mn(2+) binding site. 1-deoxy-D-xylulose 5-phosphate is bound by residues Ser151, Glu152, Ser176, and His199. Glu152 contacts Mn(2+). Residue Gly205 participates in NADPH binding. Positions 212, 217, 218, and 221 each coordinate 1-deoxy-D-xylulose 5-phosphate. Glu221 provides a ligand contact to Mn(2+).

The protein belongs to the DXR family. Mg(2+) serves as cofactor. Requires Mn(2+) as cofactor.

The enzyme catalyses 2-C-methyl-D-erythritol 4-phosphate + NADP(+) = 1-deoxy-D-xylulose 5-phosphate + NADPH + H(+). It participates in isoprenoid biosynthesis; isopentenyl diphosphate biosynthesis via DXP pathway; isopentenyl diphosphate from 1-deoxy-D-xylulose 5-phosphate: step 1/6. Catalyzes the NADPH-dependent rearrangement and reduction of 1-deoxy-D-xylulose-5-phosphate (DXP) to 2-C-methyl-D-erythritol 4-phosphate (MEP). This Clostridium botulinum (strain Kyoto / Type A2) protein is 1-deoxy-D-xylulose 5-phosphate reductoisomerase.